The sequence spans 393 residues: Formate-dependent phosphoribosylglycinamide formyltransferase (393 aa).

Residues 22–23 (EL) and Glu82 contribute to the N(1)-(5-phospho-beta-D-ribosyl)glycinamide site. Residues Arg114, Lys155, 160-165 (SSGKGQ), 195-198 (EGFI), and Glu203 contribute to the ATP site. The ATP-grasp domain maps to 119–308 (RLAAEELDLP…QFALHARAIL (190 aa)). Mg(2+) contacts are provided by Glu267 and Glu279. Residues Asp286, Lys356, and 363–364 (RR) contribute to the N(1)-(5-phospho-beta-D-ribosyl)glycinamide site.

The protein belongs to the PurK/PurT family. In terms of assembly, homodimer.

It carries out the reaction N(1)-(5-phospho-beta-D-ribosyl)glycinamide + formate + ATP = N(2)-formyl-N(1)-(5-phospho-beta-D-ribosyl)glycinamide + ADP + phosphate + H(+). It functions in the pathway purine metabolism; IMP biosynthesis via de novo pathway; N(2)-formyl-N(1)-(5-phospho-D-ribosyl)glycinamide from N(1)-(5-phospho-D-ribosyl)glycinamide (formate route): step 1/1. Functionally, involved in the de novo purine biosynthesis. Catalyzes the transfer of formate to 5-phospho-ribosyl-glycinamide (GAR), producing 5-phospho-ribosyl-N-formylglycinamide (FGAR). Formate is provided by PurU via hydrolysis of 10-formyl-tetrahydrofolate. The sequence is that of Formate-dependent phosphoribosylglycinamide formyltransferase from Pseudomonas putida (strain GB-1).